The primary structure comprises 274 residues: 3-methyl-2-oxobutanoate hydroxymethyltransferase (274 aa).

The Mg(2+) site is built by Asp-49 and Asp-88. Residues 49-50 (DS), Asp-88, and Lys-118 each bind 3-methyl-2-oxobutanoate. Mg(2+) is bound at residue Glu-120. Glu-187 functions as the Proton acceptor in the catalytic mechanism.

It belongs to the PanB family. Homodecamer; pentamer of dimers. It depends on Mg(2+) as a cofactor.

The protein resides in the cytoplasm. It carries out the reaction 3-methyl-2-oxobutanoate + (6R)-5,10-methylene-5,6,7,8-tetrahydrofolate + H2O = 2-dehydropantoate + (6S)-5,6,7,8-tetrahydrofolate. Its pathway is cofactor biosynthesis; (R)-pantothenate biosynthesis; (R)-pantoate from 3-methyl-2-oxobutanoate: step 1/2. In terms of biological role, catalyzes the reversible reaction in which hydroxymethyl group from 5,10-methylenetetrahydrofolate is transferred onto alpha-ketoisovalerate to form ketopantoate. This chain is 3-methyl-2-oxobutanoate hydroxymethyltransferase, found in Rhodopseudomonas palustris (strain TIE-1).